The sequence spans 356 residues: Protein RecA (356 aa).

Residue 67–74 (GPESSGKT) coordinates ATP.

The protein belongs to the RecA family.

It is found in the cytoplasm. Its function is as follows. Can catalyze the hydrolysis of ATP in the presence of single-stranded DNA, the ATP-dependent uptake of single-stranded DNA by duplex DNA, and the ATP-dependent hybridization of homologous single-stranded DNAs. It interacts with LexA causing its activation and leading to its autocatalytic cleavage. In Yersinia pestis (strain Pestoides F), this protein is Protein RecA.